A 324-amino-acid polypeptide reads, in one-letter code: Elongation factor P--(R)-beta-lysine ligase (324 aa).

Position 75 to 77 (75 to 77 (SPE)) interacts with substrate. ATP is bound by residues 99-101 (RNK) and asparagine 108. Tyrosine 117 contributes to the substrate binding site. An ATP-binding site is contributed by 243–244 (EL). Glutamate 250 contributes to the substrate binding site. Glycine 299 contributes to the ATP binding site.

This sequence belongs to the class-II aminoacyl-tRNA synthetase family. EpmA subfamily. In terms of assembly, homodimer.

It carries out the reaction D-beta-lysine + L-lysyl-[protein] + ATP = N(6)-((3R)-3,6-diaminohexanoyl)-L-lysyl-[protein] + AMP + diphosphate + H(+). In terms of biological role, with EpmB is involved in the beta-lysylation step of the post-translational modification of translation elongation factor P (EF-P). Catalyzes the ATP-dependent activation of (R)-beta-lysine produced by EpmB, forming a lysyl-adenylate, from which the beta-lysyl moiety is then transferred to the epsilon-amino group of a conserved specific lysine residue in EF-P. In Buchnera aphidicola subsp. Acyrthosiphon pisum (strain 5A), this protein is Elongation factor P--(R)-beta-lysine ligase.